Reading from the N-terminus, the 1396-residue chain is MFREGSRDDAALVKEGLFDKLEIGIASDVTIRDKWSCGEIKKPETINYRTFKPEKGGLFCEKIFGPTKDWECYCGKYKKIKHKGIVCDRCGVEVTLSKVRRERMAHIELAVPIVHIWFFKTTPSRIGNVLGMTASDLERVIYYEEYVVIDPGNTDLVKKQLLNDAKYREVVEKWGKDAFVAKMGGEAVYDLLKSEDLESLLGELKERLRKTKSQQARMKLAKRLKIVEGFVSSSNRPEWMVLKNIPVVPPDLRPLVPLDGGRFATSDLNDLYRRVINRNNRLKAILRLKTPEVIVRNEKRMLQEAVDALFDNGRHGHPVMGAGNRPLKSLSEMLKGKNGRFRQNLLGKRVDYSGRSVIIVGPELKFNQCGLPKEMALELFEPFIIKRLKDQGSVYTIRSAKKMIQRGAPEVWDVLEEIIKGHPVLLNRAPTLHRLGIQAFEPVLIEGKAIRVHPLVCAAFNADFDGDQMAVHVPLSIEAQLEAKVLMMAPDNIFLPSSGKPVATPSKDMTLGIYYLMADPTYFPEEHGGKTKAFKDEVEVLRALNAGGFILKDEICGSRRDETGRGIHIHEKIKVRIDGQIIETTPGRVFFNTIVPKELGFQNYSMPSKRISELILQCYKKVGLEATVRFLDDLKELGFVQSTKAAISMGLKDVKIPEIKKEILKDAYDKVAVVKKQYEDGIITDGERHSKTISIWTEVSDLLSNALYSEIKKQTNSKHNPLFLMIDSGARGNKSQLKQLGALRGLMAKPNGAIIESPITSNFREGLTVLEYSISSHGARKGLADTALKTADSGYLTRRLVDVAQDVIITERDCGTLNHIEVSTIRQGSEELLPLKDRVYGRTVSENIYQPGDKSNVLAYAGDVLTSAQAEAIDDAGIESVKIRSTLTCESRRGVCAKCYGLNLANGRLIGLGEAVGIIAAQSIGEPGTQLTMRTFHLGGIAATSSTPEIVAECDGILVYLDLRVVVDQEGNNLVLNKMGALHLVQDEGRSLSEYKKLLSTKSIESLATFPVELGAKILVNDGAAVAAGQRIAEVELHNIPIICDKPGFVHYEDLVEGVSTEKVTNKNTGLVELIVKQHRGELHPQIAIYADANMKELVGTYAIPSGAIISVEEGQRIAPGMLLARLPRGAIKTKDITGGLPRVAELVEARKPEDAADIAKIDGVVDFKGIQKNKRILVVRDEITGMEEEHLISLTKHLIVQRGDSVIKGQQLTDGLVVPHEILEICGVRELQKYLVNEVQEVYRLQGVDINDKHVEIIVRQMLQKVRITDPGDTTLLFGEDVDKKEFYEENRRTEEDGGKPAQAVPVLLGITKASLGTESFISAASFQDTTRVLTDAACSSKTDYLLGFKENVIMGHMIPGGTGFDTHKRIKQHLEKEQEDLVFDFDSEFESVAG.

The Zn(2+) site is built by C72, C74, C87, and C90. 3 residues coordinate Mg(2+): D463, D465, and D467. Zn(2+) contacts are provided by C814, C889, C896, and C899.

Belongs to the RNA polymerase beta' chain family. The RNAP catalytic core consists of 2 alpha, 1 beta, 1 beta' and 1 omega subunit. When a sigma factor is associated with the core the holoenzyme is formed, which can initiate transcription. Mg(2+) is required as a cofactor. Requires Zn(2+) as cofactor.

It catalyses the reaction RNA(n) + a ribonucleoside 5'-triphosphate = RNA(n+1) + diphosphate. DNA-dependent RNA polymerase catalyzes the transcription of DNA into RNA using the four ribonucleoside triphosphates as substrates. The polypeptide is DNA-directed RNA polymerase subunit beta' (Chlamydia trachomatis serovar A (strain ATCC VR-571B / DSM 19440 / HAR-13)).